Here is a 497-residue protein sequence, read N- to C-terminus: Cytochrome P450 26A1 (497 aa).

Heme is bound at residue C442.

It belongs to the cytochrome P450 family. Heme is required as a cofactor. In terms of tissue distribution, expressed in most fetal and adult tissues with highest levels in adult liver, heart, pituitary gland, adrenal gland, placenta and regions of the brain. Expressed at high levels in lung, pancreas, skin and uterus (at protein level). Lower expression level is detected in spleen, kidney, intestine and adipose tissue (at protein level).

It localises to the endoplasmic reticulum membrane. It is found in the microsome membrane. It carries out the reaction all-trans-retinoate + reduced [NADPH--hemoprotein reductase] + O2 = all-trans-(4S)-hydroxyretinoate + oxidized [NADPH--hemoprotein reductase] + H2O + H(+). The enzyme catalyses all-trans-(4S)-hydroxyretinoate + reduced [NADPH--hemoprotein reductase] + O2 = all-trans-(4S,16)-dihydroxyretinoate + oxidized [NADPH--hemoprotein reductase] + H2O + H(+). It catalyses the reaction all-trans-retinoate + reduced [NADPH--hemoprotein reductase] + O2 = all-trans-18-hydroxyretinoate + oxidized [NADPH--hemoprotein reductase] + H2O + H(+). Functionally, a cytochrome P450 monooxygenase involved in the metabolism of retinoates (RAs), the active metabolites of vitamin A, and critical signaling molecules in animals. RAs exist as at least four different isomers: all-trans-RA (atRA), 9-cis-RA, 13-cis-RA, and 9,13-dicis-RA, where atRA is considered to be the biologically active isomer, although 9-cis-RA and 13-cis-RA also have activity. Catalyzes the hydroxylation of atRA primarily at C-4 and C-18, thereby contributing to the regulation of atRA homeostasis and signaling. Hydroxylation of atRA limits its biological activity and initiates a degradative process leading to its eventual elimination. Involved in the convertion of atRA to all-trans-4-oxo-RA. Able to metabolize other RAs such as 9-cis, 13-cis and 9,13-di-cis RA. Can oxidize all-trans-13,14-dihydroretinoate (DRA) to metabolites which could include all-trans-4-oxo-DRA, all-trans-4-hydroxy-DRA, all-trans-5,8-epoxy-DRA, and all-trans-18-hydroxy-DRA. May play a role in the oxidative metabolism of xenobiotics such as tazarotenic acid. The protein is Cytochrome P450 26A1 of Homo sapiens (Human).